The sequence spans 392 residues: Elongation factor Tu (392 aa).

One can recognise a tr-type G domain in the interval 10-202; sequence KVHVNVGTIG…VLDEYIEDPI (193 aa). Positions 19–26 are G1; that stretch reads GHVDHGKT. Position 19–26 (19–26) interacts with GTP; it reads GHVDHGKT. Mg(2+) is bound at residue Thr26. The interval 60–64 is G2; the sequence is GITIN. The tract at residues 81–84 is G3; the sequence is DCPG. GTP-binding positions include 81-85 and 136-139; these read DCPGH and NKCD. The G4 stretch occupies residues 136–139; the sequence is NKCD. Residues 174 to 176 are G5; it reads SAL.

Belongs to the TRAFAC class translation factor GTPase superfamily. Classic translation factor GTPase family. EF-Tu/EF-1A subfamily. In terms of assembly, monomer.

It localises to the cytoplasm. It catalyses the reaction GTP + H2O = GDP + phosphate + H(+). In terms of biological role, GTP hydrolase that promotes the GTP-dependent binding of aminoacyl-tRNA to the A-site of ribosomes during protein biosynthesis. In Apple proliferation phytoplasma, this protein is Elongation factor Tu.